Reading from the N-terminus, the 441-residue chain is Lysine histidine transporter-like 2 (441 aa).

Residues 1-32 lie on the Cytoplasmic side of the membrane; sequence MEKSQSSPTKDASTKQKNVDDWLPITSSRNAK. The chain crosses the membrane as a helical span at residues 33–53; sequence WWYSAFHNVTAMVGAGVLSLP. Topologically, residues 54 to 58 are extracellular; the sequence is YAMSN. Residues 59-79 traverse the membrane as a helical segment; the sequence is LGWGPGVTIMIMSWLITFYTL. The Cytoplasmic portion of the chain corresponds to 80–110; it reads WQMVQMHEMVPGKRFDRYHELGQHAFGEKLG. Residues 111–131 form a helical membrane-spanning segment; that stretch reads LWIVVPQQLIVEVGVDIVYMV. Residues 132–155 lie on the Extracellular side of the membrane; the sequence is TGGKSLKKIHDLLCTDCKNIRTTY. Helical transmembrane passes span 156 to 176 and 177 to 197; these read WIMI…FNSI and SIVS…AWAT. Topologically, residues 198 to 222 are extracellular; it reads SVKKGVHPNVDYSSRASTTSGNVFN. Residues 223–243 form a helical membrane-spanning segment; it reads FLNALGDVAFAYAGHNVVLEI. Residues 244–264 are Cytoplasmic-facing; it reads QATIPSTPEKPSKIAMWKGVV. A helical transmembrane segment spans residues 265–285; that stretch reads VAYIVVAICYFPVAFVCYYIF. Residues 286 to 300 are Extracellular-facing; it reads GNSVDDNILMTLEKP. Residues 301–321 form a helical membrane-spanning segment; the sequence is IWLIAIANAFVVVHVIGSYQI. At 322–347 the chain is on the cytoplasmic side; the sequence is YAMPVFDMLETFLVKKMMFAPSFKLR. Residues 348–370 traverse the membrane as a helical segment; it reads FITRTLYVAFTMFVAICIPFFGG. Residues 371-373 are Extracellular-facing; that stretch reads LLG. Residues 374-396 traverse the membrane as a helical segment; sequence FFGGFAFAPTTYYLPCIMWLCIK. Residues 397–406 lie on the Cytoplasmic side of the membrane; the sequence is KPKKYGLSWC. A helical transmembrane segment spans residues 407–427; sequence INWFCIVVGVILTILAPIGGL. The Extracellular segment spans residues 428 to 441; it reads RTIIISAKNYEFFS.

This sequence belongs to the amino acid/polyamine transporter 2 family. Amino acid/auxin permease (AAAP) (TC 2.A.18.2) subfamily.

It localises to the cell membrane. Its function is as follows. Amino acid transporter. In Arabidopsis thaliana (Mouse-ear cress), this protein is Lysine histidine transporter-like 2.